The primary structure comprises 289 residues: ATP synthase mitochondrial F1 complex assembly factor 2 (289 aa).

A mitochondrion-targeting transit peptide spans 1-40 (MWRRCLRLRDVGRRLLNLPRSGLTASEGLGPKLPTPIRAY). N6-succinyllysine is present on K133.

The protein belongs to the ATP12 family. Interacts with ATP5F1B; involved in the assembly of the F1 component of the mitochondrial ATP synthase (ATPase). Interacts with FMC1.

The protein resides in the mitochondrion inner membrane. Its function is as follows. Plays a role in the assembly of the F1 component of the mitochondrial ATP synthase (ATPase). The chain is ATP synthase mitochondrial F1 complex assembly factor 2 (ATPAF2) from Bos taurus (Bovine).